A 395-amino-acid chain; its full sequence is Phosphopentomutase (395 aa).

Residues D13, D288, H293, D329, H330, and H341 each coordinate Mn(2+).

This sequence belongs to the phosphopentomutase family. It depends on Mn(2+) as a cofactor.

It localises to the cytoplasm. It catalyses the reaction 2-deoxy-alpha-D-ribose 1-phosphate = 2-deoxy-D-ribose 5-phosphate. The enzyme catalyses alpha-D-ribose 1-phosphate = D-ribose 5-phosphate. It participates in carbohydrate degradation; 2-deoxy-D-ribose 1-phosphate degradation; D-glyceraldehyde 3-phosphate and acetaldehyde from 2-deoxy-alpha-D-ribose 1-phosphate: step 1/2. Isomerase that catalyzes the conversion of deoxy-ribose 1-phosphate (dRib-1-P) and ribose 1-phosphate (Rib-1-P) to deoxy-ribose 5-phosphate (dRib-5-P) and ribose 5-phosphate (Rib-5-P), respectively. The sequence is that of Phosphopentomutase from Agathobacter rectalis (strain ATCC 33656 / DSM 3377 / JCM 17463 / KCTC 5835 / VPI 0990) (Eubacterium rectale).